The chain runs to 291 residues: Taste receptor type 2 member 16 (291 aa).

A topological domain (extracellular) is located at residue Met1. The chain crosses the membrane as a helical span at residues 2 to 22 (IPIQLTVFFMIIYVLESLTII). At 23 to 41 (VQSSLIVAVLGREWLQVRR) the chain is on the cytoplasmic side. Residues 42–62 (LMPVDMILISLGISRFCLQWA) traverse the membrane as a helical segment. The Extracellular segment spans residues 63–84 (SMLNNFCSYFNLNYVLCNLTIT). Asn80 carries N-linked (GlcNAc...) asparagine glycosylation. The helical transmembrane segment at 85–105 (WEFFNILTFWLNSLLTVFYCI) threads the bilayer. The Cytoplasmic segment spans residues 106–125 (KVSSFTHHIFLWLRWRILRL). A helical membrane pass occupies residues 126-146 (FPWILLGSLMITCVTIIPSAI). Over 147–182 (GNYIQIQLLTMEHLPRNSTVTDKLENFHQYQFQAHT) the chain is Extracellular. A glycan (N-linked (GlcNAc...) asparagine) is linked at Asn163. A helical transmembrane segment spans residues 183–203 (VALVIPFILFLASTIFLMASL). Residues 204-228 (TKQIQHHSTGHCNPSMKARFTALRS) are Cytoplasmic-facing. A helical membrane pass occupies residues 229 to 249 (LAVLFIVFTSYFLTILITIIG). The Extracellular portion of the chain corresponds to 250–257 (TLFDKRCW). A helical transmembrane segment spans residues 258-278 (LWVWEAFVYAFILMHSTSLML). Residues 279 to 291 (SSPTLKRILKGKC) are Cytoplasmic-facing.

It belongs to the G-protein coupled receptor T2R family. Interacts with RTP3 and RTP4. In terms of tissue distribution, expressed in a subset of gustducin-positive taste receptor cells of the tongue. Expressed in circumvallate papillae and testis.

The protein localises to the cell membrane. In terms of biological role, gustducin-coupled receptor implicated in the perception of bitter compounds in the oral cavity and the gastrointestinal tract. Signals through PLCB2 and the calcium-regulated cation channel TRPM5. This is Taste receptor type 2 member 16 (TAS2R16) from Homo sapiens (Human).